We begin with the raw amino-acid sequence, 110 residues long: uncharacterized protein (110 aa).

To M.jannaschii MJ0123 and MJ1213.

This is an uncharacterized protein from Aquifex aeolicus (strain VF5).